A 727-amino-acid chain; its full sequence is Glycerol-3-phosphate dehydrogenase, mitochondrial (727 aa).

Residues 1-42 constitute a mitochondrion transit peptide; sequence MAFQKAVKRTVLVCGGALATVLGLSQCSHYRRKQVNLACLKA. FAD is bound at residue 71 to 99; sequence DILVIGGGATGSGCALDAVTRGLKTALVE. Phosphotyrosine is present on tyrosine 601. EF-hand domains lie at 623–658 and 659–694; these read SDIERYTKRFHKFDADEKGFITIVDVQRVLENINVK and IDENTLHEILSEVDLNKNGQVELNEFLQLMSAIQKG. The Ca(2+) site is built by aspartate 672, asparagine 674, asparagine 676, glutamine 678, and glutamate 683.

This sequence belongs to the FAD-dependent glycerol-3-phosphate dehydrogenase family. The cofactor is FAD.

It is found in the mitochondrion. The catalysed reaction is a quinone + sn-glycerol 3-phosphate = dihydroxyacetone phosphate + a quinol. It functions in the pathway polyol metabolism; glycerol degradation via glycerol kinase pathway; glycerone phosphate from sn-glycerol 3-phosphate (aerobic route): step 1/1. Calcium-binding enhance the activity of the enzyme. Calcium-responsive mitochondrial glycerol-3-phosphate dehydrogenase which seems to be a key component of the pancreatic beta-cell glucose-sensing device. The chain is Glycerol-3-phosphate dehydrogenase, mitochondrial (GPD2) from Mesocricetus auratus (Golden hamster).